A 393-amino-acid chain; its full sequence is Sialyltransferase-like protein 1 (393 aa).

Over 1 to 8 (MKRPLRRP) the chain is Cytoplasmic. A helical; Signal-anchor for type II membrane protein membrane pass occupies residues 9–27 (FAVLLFVVLCAAASFPSVL). Residues 28–393 (RRSVGPAPVL…IAVPPVVFYH (366 aa)) are Lumenal-facing. N-linked (GlcNAc...) asparagine glycosylation is found at asparagine 49, asparagine 212, and asparagine 258.

Belongs to the glycosyltransferase 29 family.

The protein localises to the golgi apparatus membrane. Possesses sialyltransferase-like activity in vitro. Transfers sialic acid to the oligosaccharide Gal-beta-1,3-GalNAc and to glycoproteins such as asialofetuin, alpha-1-acid glycoprotein (NeuAc-alpha-2,3-Gal-beta-1,3-GalNAc-) and andasialo-alpha-1-acid glycoprotein. The transferred sialic acid is linked to galactose of Gal-beta-1,3-GalNAc through alpha-2,6-linkage. The sequence is that of Sialyltransferase-like protein 1 from Oryza sativa subsp. indica (Rice).